The following is a 115-amino-acid chain: Large ribosomal subunit protein bL19 (115 aa).

It belongs to the bacterial ribosomal protein bL19 family.

In terms of biological role, this protein is located at the 30S-50S ribosomal subunit interface and may play a role in the structure and function of the aminoacyl-tRNA binding site. This Enterobacter sp. (strain 638) protein is Large ribosomal subunit protein bL19.